Consider the following 243-residue polypeptide: Geranylgeranylglyceryl phosphate synthase (243 aa).

Residues aspartate 22 and serine 51 each contribute to the Mg(2+) site. Sn-glycerol 1-phosphate-binding positions include tyrosine 169–glycine 175, glycine 200–glycine 201, and glycine 222–threonine 223.

It belongs to the GGGP/HepGP synthase family. Group II subfamily. Mg(2+) is required as a cofactor.

It localises to the cytoplasm. The catalysed reaction is sn-glycerol 1-phosphate + (2E,6E,10E)-geranylgeranyl diphosphate = sn-3-O-(geranylgeranyl)glycerol 1-phosphate + diphosphate. It participates in membrane lipid metabolism; glycerophospholipid metabolism. Functionally, prenyltransferase that catalyzes the transfer of the geranylgeranyl moiety of geranylgeranyl diphosphate (GGPP) to the C3 hydroxyl of sn-glycerol-1-phosphate (G1P). This reaction is the first ether-bond-formation step in the biosynthesis of archaeal membrane lipids. The polypeptide is Geranylgeranylglyceryl phosphate synthase (Methanosphaera stadtmanae (strain ATCC 43021 / DSM 3091 / JCM 11832 / MCB-3)).